The chain runs to 497 residues: Cytochrome P450 71A14 (497 aa).

A helical membrane pass occupies residues 3–23 (MIIISLCLATILALLLLKQFL). A heme-binding site is contributed by C440.

This sequence belongs to the cytochrome P450 family. The cofactor is heme.

It is found in the membrane. The protein is Cytochrome P450 71A14 (CYP71A14) of Arabidopsis thaliana (Mouse-ear cress).